Consider the following 397-residue polypeptide: Lysophospholipid transporter LplT (397 aa).

Over 1–17 (MSESVHTNTSLWSKGMK) the chain is Periplasmic. Residues 18–38 (AVIVAQFLSAFGDNALLFATL) form a helical membrane-spanning segment. At 39 to 52 (ALLKAQFYPEWSQP) the chain is on the cytoplasmic side. The chain crosses the membrane as a helical span at residues 53-73 (ILQMVFVGAYILFAPFVGQVA). Residues 74 to 90 (DSFAKGRVMMFANGLKL) lie on the Periplasmic side of the membrane. Residues 91-111 (LGAASICFGINPFLGYTLVGV) form a helical membrane-spanning segment. The Cytoplasmic segment spans residues 112-144 (GAAAYSPAKYGILGELTTGSKLVKANGLMEAST). The helical transmembrane segment at 145–165 (IAAILLGSVAGGVLADWHVLV) threads the bilayer. Residue Ala166 is a topological domain, periplasmic. Residues 167–187 (LAACALAYGGAVVANIYIPKL) form a helical membrane-spanning segment. The Cytoplasmic segment spans residues 188–226 (AAARPGQSWNLINMTRSFLNACTSLWRNGETRFSLVGTS). A helical transmembrane segment spans residues 227–247 (LFWGAGVTLRFLLVLWVPVAL). Topologically, residues 248–256 (GITDNATPT) are periplasmic. The helical transmembrane segment at 257–277 (YLNAMVAIGIVVGAGAAAKLV) threads the bilayer. The Cytoplasmic portion of the chain corresponds to 278-280 (TLE). A helical membrane pass occupies residues 281–301 (TVSRCMPAGILIGVVVLIFSL). Over 302–304 (QHE) the chain is Periplasmic. The helical transmembrane segment at 305–325 (LLPAYALLMLIGVMGGFFVVP) threads the bilayer. Residues 326–343 (LNALLQERGKKSVGAGNA) are Cytoplasmic-facing. A helical transmembrane segment spans residues 344 to 364 (IAVQNLGENSAMLLMLGIYSL). The Periplasmic portion of the chain corresponds to 365–366 (AV). The helical transmembrane segment at 367–387 (MIGIPVVPIGIGFGALFALAI) threads the bilayer. Over 388–397 (TALWIWQRRH) the chain is Cytoplasmic.

The protein belongs to the major facilitator superfamily. LplT (TC 2.A.1.42) family.

It is found in the cell inner membrane. Catalyzes the facilitated diffusion of 2-acyl-glycero-3-phosphoethanolamine (2-acyl-GPE) into the cell. The sequence is that of Lysophospholipid transporter LplT from Escherichia coli O8 (strain IAI1).